Here is a 228-residue protein sequence, read N- to C-terminus: Cytochrome c oxidase subunit 2 (228 aa).

At 1–26 (MSTWANLGLQDSASPLMEQLIFFHDH) the chain is on the mitochondrial intermembrane side. Residues 27 to 48 (ALLILVMITVLVGYLMFMLFFN) form a helical membrane-spanning segment. The Mitochondrial matrix portion of the chain corresponds to 49–62 (NYVNRFLLHGQLIE). Residues 63–82 (MIWTILPAIILLFIALPSLR) traverse the membrane as a helical segment. The Mitochondrial intermembrane portion of the chain corresponds to 83 to 228 (LLYLLDEINE…FIKWISSNNS (146 aa)). Residues H161, C196, E198, C200, H204, and M207 each contribute to the Cu cation site. Residue E198 participates in Mg(2+) binding.

This sequence belongs to the cytochrome c oxidase subunit 2 family. Component of the cytochrome c oxidase (complex IV, CIV), a multisubunit enzyme composed of a catalytic core of 3 subunits and several supernumerary subunits. The complex exists as a monomer or a dimer and forms supercomplexes (SCs) in the inner mitochondrial membrane with ubiquinol-cytochrome c oxidoreductase (cytochrome b-c1 complex, complex III, CIII). It depends on Cu cation as a cofactor.

The protein resides in the mitochondrion inner membrane. It carries out the reaction 4 Fe(II)-[cytochrome c] + O2 + 8 H(+)(in) = 4 Fe(III)-[cytochrome c] + 2 H2O + 4 H(+)(out). Component of the cytochrome c oxidase, the last enzyme in the mitochondrial electron transport chain which drives oxidative phosphorylation. The respiratory chain contains 3 multisubunit complexes succinate dehydrogenase (complex II, CII), ubiquinol-cytochrome c oxidoreductase (cytochrome b-c1 complex, complex III, CIII) and cytochrome c oxidase (complex IV, CIV), that cooperate to transfer electrons derived from NADH and succinate to molecular oxygen, creating an electrochemical gradient over the inner membrane that drives transmembrane transport and the ATP synthase. Cytochrome c oxidase is the component of the respiratory chain that catalyzes the reduction of oxygen to water. Electrons originating from reduced cytochrome c in the intermembrane space (IMS) are transferred via the dinuclear copper A center (CU(A)) of subunit 2 and heme A of subunit 1 to the active site in subunit 1, a binuclear center (BNC) formed by heme A3 and copper B (CU(B)). The BNC reduces molecular oxygen to 2 water molecules using 4 electrons from cytochrome c in the IMS and 4 protons from the mitochondrial matrix. The protein is Cytochrome c oxidase subunit 2 (mt:CoII) of Drosophila yakuba (Fruit fly).